A 257-amino-acid chain; its full sequence is Protein windbeutel (257 aa).

The first 21 residues, 1–21, serve as a signal peptide directing secretion; sequence MMHILVTLLLVAIHSIPTTWA. Positions 24 to 27 are CXXC motif; sequence CTGC. Positions 254-257 match the Prevents secretion from ER motif; that stretch reads KEEL.

As to quaternary structure, homodimer. Interacts with pip; the interaction is direct and does not require pip to be folded. Briefly expressed in the follicle cells of the ovary, at around the time when the dorsoventral axis of the egg chamber is first established.

It is found in the endoplasmic reticulum lumen. In terms of biological role, probable chaperone protein involved in dorsoventral axis patterning in early embryos. Probably acts by folding and targeting pipe (pip) into the Golgi. This chain is Protein windbeutel, found in Drosophila melanogaster (Fruit fly).